A 2104-amino-acid polypeptide reads, in one-letter code: Myosin type-2 heavy chain 2 (2104 aa).

Residues 35–85 (DERTWIWIPDSKESFVKAWIVEDLGEKYRVKLERDGSERIVDGFDAEKVNP) form the Myosin N-terminal SH3-like domain. The Myosin motor domain maps to 89–767 (DMVDDMAALT…VLGSLEDRRN (679 aa)). 182-189 (GESGAGKT) provides a ligand contact to ATP. Positions 646–660 (LSSLMHQLEATQPHF) are actin-binding. A coiled-coil region spans residues 829-2104 (LGTTQTDEYL…RSNRSPSVLR (1276 aa)). Disordered stretches follow at residues 1245–1278 (NRSV…DGNN) and 1398–1426 (MEFT…SKRS). Over residues 1246 to 1259 (RSVTQHTLDGNSPH) the composition is skewed to polar residues. Basic and acidic residues predominate over residues 1261 to 1278 (SFEEKHSGDPLKRIDGNN). Polar residues predominate over residues 1409-1424 (SKISNLPSSQPGSPSK). A Phosphoserine modification is found at serine 1421.

Belongs to the TRAFAC class myosin-kinesin ATPase superfamily. Myosin family. In terms of assembly, binds to cdc4 and rlc1.

Functionally, stabilizes the F-actin cables forming the F-actin ring that surrounds the nucleus during interphase. May work in conjunction with myo2. In Schizosaccharomyces pombe (strain 972 / ATCC 24843) (Fission yeast), this protein is Myosin type-2 heavy chain 2 (myo3).